We begin with the raw amino-acid sequence, 770 residues long: Pheromone-regulated membrane protein 10 (770 aa).

2 disordered regions span residues 1–125 and 139–169; these read MDGR…DGDD and NQGG…RNEE. 2 stretches are compositionally biased toward polar residues: residues 49 to 63 and 78 to 93; these read SGKS…NNDN and DLSS…SKGT. The segment covering 155-169 has biased composition (basic and acidic residues); it reads ENGKDDIEKNNRNEE. 10 helical membrane-spanning segments follow: residues 453–473, 475–495, 505–525, 529–549, 568–588, 604–624, 629–649, 659–679, 681–701, and 740–760; these read WMCV…AFGG, WVNL…QFIL, VFEI…GSIP, ICFG…YIIL, FYAI…SALF, LISP…ISLL, ISQL…TYWA, FTAA…SRIW, GLAV…GIAS, and IQVC…VYPF.

The protein belongs to the ThrE exporter (TC 2.A.79) family.

Its subcellular location is the membrane. The sequence is that of Pheromone-regulated membrane protein 10 (PRM10) from Saccharomyces cerevisiae (strain YJM789) (Baker's yeast).